A 911-amino-acid polypeptide reads, in one-letter code: Valine--tRNA ligase (911 aa).

Residues 53–63 (PNVTGTLHLGH) carry the 'HIGH' region motif. Positions 533-537 (KMSKS) match the 'KMSKS' region motif. K536 contacts ATP. Positions 845 to 910 (KEIERLTKEL…NRLAMLRSMQ (66 aa)) form a coiled coil.

Belongs to the class-I aminoacyl-tRNA synthetase family. ValS type 1 subfamily. In terms of assembly, monomer.

The protein resides in the cytoplasm. The enzyme catalyses tRNA(Val) + L-valine + ATP = L-valyl-tRNA(Val) + AMP + diphosphate. In terms of biological role, catalyzes the attachment of valine to tRNA(Val). As ValRS can inadvertently accommodate and process structurally similar amino acids such as threonine, to avoid such errors, it has a 'posttransfer' editing activity that hydrolyzes mischarged Thr-tRNA(Val) in a tRNA-dependent manner. In Symbiobacterium thermophilum (strain DSM 24528 / JCM 14929 / IAM 14863 / T), this protein is Valine--tRNA ligase.